A 331-amino-acid polypeptide reads, in one-letter code: Threonine-phosphate decarboxylase (331 aa).

Lys-192 is modified (N6-(pyridoxal phosphate)lysine).

This sequence belongs to the class-I pyridoxal-phosphate-dependent aminotransferase family. Homodimer. It depends on pyridoxal 5'-phosphate as a cofactor.

The protein resides in the cytoplasm. It catalyses the reaction O-phospho-L-threonine + H(+) = (R)-1-aminopropan-2-yl phosphate + CO2. It participates in cofactor biosynthesis; adenosylcobalamin biosynthesis. Functionally, decarboxylates L-threonine-O-3-phosphate to yield (R)-1-amino-2-propanol O-2-phosphate, the precursor for the linkage between the nucleotide loop and the corrin ring in cobalamin. The chain is Threonine-phosphate decarboxylase (cobC) from Pseudomonas aeruginosa (strain ATCC 15692 / DSM 22644 / CIP 104116 / JCM 14847 / LMG 12228 / 1C / PRS 101 / PAO1).